The sequence spans 55 residues: Large ribosomal subunit protein bL32 (55 aa).

The protein belongs to the bacterial ribosomal protein bL32 family.

The sequence is that of Large ribosomal subunit protein bL32 from Aeromonas hydrophila subsp. hydrophila (strain ATCC 7966 / DSM 30187 / BCRC 13018 / CCUG 14551 / JCM 1027 / KCTC 2358 / NCIMB 9240 / NCTC 8049).